The chain runs to 445 residues: Trigger factor (445 aa).

The PPIase FKBP-type domain occupies G166 to V251.

This sequence belongs to the FKBP-type PPIase family. Tig subfamily.

The protein localises to the cytoplasm. The catalysed reaction is [protein]-peptidylproline (omega=180) = [protein]-peptidylproline (omega=0). In terms of biological role, involved in protein export. Acts as a chaperone by maintaining the newly synthesized protein in an open conformation. Functions as a peptidyl-prolyl cis-trans isomerase. This Gluconacetobacter diazotrophicus (strain ATCC 49037 / DSM 5601 / CCUG 37298 / CIP 103539 / LMG 7603 / PAl5) protein is Trigger factor.